The chain runs to 428 residues: Histone deacetylase 3 (428 aa).

The segment at 3–316 is histone deacetylase; sequence KTVAYFYDPD…WTYETSLLVD (314 aa). 3 residues coordinate 1D-myo-inositol 1,4,5,6-tetrakisphosphate: histidine 17, glycine 21, and lysine 25. Histidine 135 is an active-site residue. 3 residues coordinate Zn(2+): aspartate 170, histidine 172, and aspartate 259. Residue arginine 265 coordinates 1D-myo-inositol 1,4,5,6-tetrakisphosphate. Residues 385-428 form a disordered region; that stretch reads LSYDRTDEPDPEERGSEENYSRPEAANEFYDGDHDNDKESDVEI. Basic and acidic residues-rich tracts occupy residues 386–405 and 415–428; these read SYDR…ENYS and DGDH…DVEI.

The protein belongs to the histone deacetylase family. HD type 1 subfamily.

It localises to the nucleus. Its subcellular location is the chromosome. It is found in the cytoplasm. The protein resides in the cytosol. The enzyme catalyses N(6)-acetyl-L-lysyl-[histone] + H2O = L-lysyl-[histone] + acetate. It catalyses the reaction N(6)-acetyl-L-lysyl-[protein] + H2O = L-lysyl-[protein] + acetate. It carries out the reaction N(6)-(2E)-butenoyl-L-lysyl-[protein] + H2O = (2E)-2-butenoate + L-lysyl-[protein]. The catalysed reaction is N(6)-(2-hydroxyisobutanoyl)-L-lysyl-[protein] + H2O = 2-hydroxy-2-methylpropanoate + L-lysyl-[protein]. The enzyme catalyses N(6)-[(S)-lactoyl]-L-lysyl-[protein] + H2O = (S)-lactate + L-lysyl-[protein]. With respect to regulation, inositol tetraphosphate (1D-myo-inositol 1,4,5,6-tetrakisphosphate) promotes the histone deacetylase activity by acting as an intermolecular glue between HDAC3 and N-Cor repressor complex components. Its function is as follows. Histone deacetylase that catalyzes the deacetylation of lysine residues on the N-terminal part of the core histones (H2A, H2B, H3 and H4), and some other non-histone substrates. Histone deacetylation gives a tag for epigenetic repression and plays an important role in transcriptional regulation, cell cycle progression and developmental events. Histone deacetylases act via the formation of large multiprotein complexes, such as N-Cor repressor complex, which activate the histone deacetylase activity. Participates in the BCL6 transcriptional repressor activity by deacetylating the H3 'Lys-27' (H3K27) on enhancer elements, antagonizing EP300 acetyltransferase activity and repressing proximal gene expression. Also functions as a deacetylase for non-histone targets. In addition to protein deacetylase activity, also acts as a protein-lysine deacylase by recognizing other acyl groups: catalyzes removal of (2E)-butenoyl (crotonyl), lactoyl (lactyl) and 2-hydroxyisobutanoyl (2-hydroxyisobutyryl) acyl groups from lysine residues, leading to protein decrotonylation, delactylation and de-2-hydroxyisobutyrylation, respectively. The protein is Histone deacetylase 3 (HDAC3) of Gallus gallus (Chicken).